Reading from the N-terminus, the 1361-residue chain is MRASGRHDVSLKIVLATGCLLLANFSGASSAVATECPDQSPELQPWSPGHNRDYQVHIGHGRKLLLTSSATVHSITISGGGKLVIKDHHEHIVLRTRYILIDDGGELHAGSALCPFEGNFSIVLYGRADENILPDPYYGLKYIGVDKGGTLELHGQKKLSWTFLNKTLHPGGMQEGGYFFERSWGHRGVIVHVIDAKLGTVVHSDRFDTYRSKKESERLVQYLNAVPDGRILSVAVNDEGSRNLDDTARKAMTKLGSKHFLHLGFRHPWSFITVKGNPSSSVEDHIEYHGHKGSAAARVFKLFQTEHGEHFNVSSSSEWVQDVEWTEWFDHDKVPQSKGGEKISDLRAAYPGKICNRPIDIQATTMDGVALSTEVVYKNGQDYRFACYTRGRACRSYRVRFLCGKPVRPKLTVSIDTNVNSTILSLVDNVRSWRPGDTLVVASTDYSMYQAEEFRVLPCKACTSTQVKVAGKPQYLHIGEEIDGVDMRAEVGLLTRNIVVMGEMEDRCYPYTNHICDFFDFDTFGGHIKFALGFKAAHLEGVELKYMGQQLVGQYPIHFHLAGDLDEQGGYDPPTYIRDLSIHHTFSRCITVHGSNGLLIKDVVGYNSLGHCFFTEDGPEERNTFDHCLGLLVKSGTLLPSDRDSRMCKVITEDSYPGYIPKPRQDCNAVSTFWMANPNNNLINCAAAGSEETGFWFIFHHVPTGPSVGMYSPGYSEHIPLGKFYNNRAHSNYRAGMIIDNGVKTTEASAKDKRPFLSIISARYSPHQDADPLKPREPAIIRHFTAYKNQDHGAWLRGGDVWLDSCRFADNGIGLTLASGGTFPYDDGSKQEIKNSLFVGESGNVGTEMMDNRIWGPGGLDHSGRTLPIGQNFPIRGIQFYDGPINIQNCTFRKFAALEGRHTSALAFRLNNAWQSCPHNNVTNIAFEDVPITSRVFFGEPGPWFNQLDMDGDKTSVFHDLDGSVSEYPGSYLTKDDNWLVRHPDCINVPDWRGAICSGRYAQMYIQAYKSSNLRMKIIKNDFPSHPLYLEGALTRSTHYQQYQPVITLQKGYTIHWDQTAPAELAIWLINFNKGDWIRVGLCYPRGTTFSILSDVHNRLLKQTSKTGTFVRTLQMDKVEQSYPGRSHYYWDEDSGLLFLKLKAQNEREKFAFCSMKGCERIKIKALLPRNAGISDCTATAYPRFTERAIVDVPMPRKLFGAQLKTKDHFLEVKMESSRQHFFHLRNDFAYIEVDGRRYPCSEDGIQIVVIDGSRGHVVSHGSFRNAILQGIPWQLFNYVAAIPDNSIVLMASKGRYITRGPWTRVLEKLGADKGLKLKEKMAFVGFKGSFRPIWVTLETEDHKAKIFQVVPIPVVRKKKL.

The N-terminal stretch at 1 to 30 (MRASGRHDVSLKIVLATGCLLLANFSGASS) is a signal peptide. Positions 44–166 (QPWSPGHNRD…KKLSWTFLNK (123 aa)) constitute a G8 domain. Residues Asn119, Asn165, Asn312, and Asn420 are each glycosylated (N-linked (GlcNAc...) asparagine). One can recognise a GG-type lectin 1 domain in the interval 176–317 (GGYFFERSWG…GEHFNVSSSS (142 aa)). The interval 295 to 591 (AAARVFKLFQ…IHHTFSRCIT (297 aa)) is necessary for its endoplasmic reticulum (ER) retention and interaction with HSPA5. PbH1 repeat units lie at residues 572–594 (DPPT…TVHG), 595–617 (SNGL…FTED), 719–741 (IPLG…IIDN), and 798–819 (GGDV…TLAS). 2 N-linked (GlcNAc...) asparagine glycosylation sites follow: Asn889 and Asn921. In terms of domain architecture, GG-type lectin 2 spans 1227-1361 (NDFAYIEVDG…PIPVVRKKKL (135 aa)).

Belongs to the CEMIP family. Interacts with EPHA2 and ITPR3. Interacts with HSPA5/BIP; the interaction induces calcium leakage from the endoplasmic reticulum and cell migration. Interacts with clathrin heavy chain/CLTC. In terms of processing, N-glycosylated; glycosylation is not necessary for HA-binding. In terms of tissue distribution, expressed in Deiters' cells and various supporting cells in the organ of Corti including inner phalangeal, border, inner and outer pillar cells (at protein level). Weakly expressed in brain and testis. In ear, it is specifically expressed in inner ear. Expressed in Deiters' cells in the organ of Corti at P0 (postnatal day zero) before the onset of hearing, but disappears by day P7. Also expressed in fibrocytes of the spiral ligament and the spiral limbus through to P21, when the cochlea matures.

Its subcellular location is the nucleus. The protein localises to the cytoplasm. The protein resides in the endoplasmic reticulum. It localises to the cell membrane. It is found in the membrane. Its subcellular location is the clathrin-coated pit. The protein localises to the secreted. It catalyses the reaction Random hydrolysis of (1-&gt;4)-linkages between N-acetyl-beta-D-glucosamine and D-glucuronate residues in hyaluronate.. Activity is up-regulated by histamine. In terms of biological role, mediates depolymerization of hyaluronic acid (HA) via the cell membrane-associated clathrin-coated pit endocytic pathway. Binds to hyaluronic acid. Hydrolyzes high molecular weight hyaluronic acid to produce an intermediate-sized product, a process that may occur through rapid vesicle endocytosis and recycling without intracytoplasmic accumulation or digestion in lysosomes. Involved in hyaluronan catabolism in the dermis of the skin and arthritic synovium. Positively regulates epithelial-mesenchymal transition (EMT), and hence tumor cell growth, invasion and cancer dissemination. In collaboration with HSPA5/BIP, promotes cancer cell migration in a calcium and PKC-dependent manner. May be involved in hearing. The protein is Cell migration-inducing and hyaluronan-binding protein (Cemip) of Mus musculus (Mouse).